Here is a 144-residue protein sequence, read N- to C-terminus: Actin-associated protein FAM107A (144 aa).

A coiled-coil region spans residues 66 to 112 (ELQRVLEHRRRNQLIKKKKEELEAKRLQCPFEQELLRRQQRLNQLEK). The Nuclear localization signal signature appears at 74-84 (RRRNQLIKKKK). A disordered region spans residues 105 to 124 (QRLNQLEKPPEKEEDHAPEF). Residues 112-124 (KPPEKEEDHAPEF) show a composition bias toward basic and acidic residues.

The protein belongs to the FAM107 family. As to quaternary structure, interacts with ACTB. Interacts with COMMD1; this interaction stabilizes COMMD1 in the nucleus. Interacts with MAP1A. Interacts with PRDX1. Interacts with F-actin. In terms of tissue distribution, widely expressed. Expressed in neurons. Expressed in malignant glial tumors. Expression is reduced or absent in a number of cancer cell lines.

It is found in the nucleus. Its subcellular location is the cytoplasm. It localises to the cytoskeleton. The protein localises to the stress fiber. The protein resides in the cell junction. It is found in the focal adhesion. Its subcellular location is the cell projection. It localises to the ruffle membrane. The protein localises to the synapse. In terms of biological role, stress-inducible actin-binding protein that plays a role in synaptic and cognitive functions by modulating actin filamentous (F-actin) dynamics. Mediates polymerization of globular actin to F-actin. Also binds to, stabilizes and bundles F-actin. Involved in synaptic function by regulating neurite outgrowth in an actin-dependent manner and for the acquisition of hippocampus-dependent cognitive function, such as learning and long-term memory. Plays a role in the actin and microtubule cytoskeleton organization; negatively regulates focal adhesion (FA) assembly promoting malignant glial cell migration in an actin-, microtubule- and MAP1A-dependent manner. Also involved in neuroblastoma G1/S phase cell cycle progression and cell proliferation inhibition by stimulating ubiquitination of NF-kappa-B subunit RELA and NF-kappa-B degradation in a COMMD1- and actin-dependent manner. May play a role in tumor development. The protein is Actin-associated protein FAM107A of Homo sapiens (Human).